Reading from the N-terminus, the 285-residue chain is tRNA-cytidine(32) 2-sulfurtransferase (285 aa).

A PP-loop motif motif is present at residues 49-54 (SGGKDS). [4Fe-4S] cluster contacts are provided by Cys-124, Cys-127, and Cys-215.

The protein belongs to the TtcA family. Homodimer. Mg(2+) serves as cofactor. Requires [4Fe-4S] cluster as cofactor.

The protein localises to the cytoplasm. The enzyme catalyses cytidine(32) in tRNA + S-sulfanyl-L-cysteinyl-[cysteine desulfurase] + AH2 + ATP = 2-thiocytidine(32) in tRNA + L-cysteinyl-[cysteine desulfurase] + A + AMP + diphosphate + H(+). The protein operates within tRNA modification. Catalyzes the ATP-dependent 2-thiolation of cytidine in position 32 of tRNA, to form 2-thiocytidine (s(2)C32). The sulfur atoms are provided by the cysteine/cysteine desulfurase (IscS) system. This Hahella chejuensis (strain KCTC 2396) protein is tRNA-cytidine(32) 2-sulfurtransferase.